We begin with the raw amino-acid sequence, 113 residues long: UPF0060 membrane protein Arth_4423 (113 aa).

4 consecutive transmembrane segments (helical) span residues 7–27 (VLLFILAAVAEIGGAWLVWQA), 33–53 (AWWWAGLGIIALGLYGFVATL), 62–82 (ILAAYGGVFVAGSLVWGMVFD), and 91–111 (VIGSVICLVGVAVIMFAPRGT).

It belongs to the UPF0060 family.

The protein localises to the cell membrane. The protein is UPF0060 membrane protein Arth_4423 of Arthrobacter sp. (strain FB24).